Here is a 362-residue protein sequence, read N- to C-terminus: sn-glycerol-3-phosphate import ATP-binding protein UgpC (362 aa).

An ABC transporter domain is found at 4–235 (LSFRNVKKTY…PASTFVAGFI (232 aa)). 37–44 (GPSGCGKS) provides a ligand contact to ATP.

It belongs to the ABC transporter superfamily. sn-glycerol-3-phosphate importer (TC 3.A.1.1.3) family. The complex is composed of two ATP-binding proteins (UgpC), two transmembrane proteins (UgpA and UgpE) and a solute-binding protein (UgpB).

The protein localises to the cell inner membrane. It carries out the reaction sn-glycerol 3-phosphate(out) + ATP + H2O = sn-glycerol 3-phosphate(in) + ADP + phosphate + H(+). Its function is as follows. Part of the ABC transporter complex UgpBAEC involved in sn-glycerol-3-phosphate (G3P) import. Responsible for energy coupling to the transport system. This is sn-glycerol-3-phosphate import ATP-binding protein UgpC from Bordetella parapertussis (strain 12822 / ATCC BAA-587 / NCTC 13253).